We begin with the raw amino-acid sequence, 80 residues long: Large ribosomal subunit protein uL29 (80 aa).

This sequence belongs to the universal ribosomal protein uL29 family.

In Mycobacterium marinum (strain ATCC BAA-535 / M), this protein is Large ribosomal subunit protein uL29.